The sequence spans 165 residues: NADH-quinone oxidoreductase subunit I (165 aa).

4Fe-4S ferredoxin-type domains lie at 57–86 and 96–125; these read RRYENGEERCIACKLCEAVCPALAITIESD and SRYDIDLTKCIFCGFCEESCPVDSIVETHI. Residues cysteine 66, cysteine 69, cysteine 72, cysteine 76, cysteine 105, cysteine 108, cysteine 111, and cysteine 115 each contribute to the [4Fe-4S] cluster site.

The protein belongs to the complex I 23 kDa subunit family. NDH-1 is composed of 14 different subunits. Subunits NuoA, H, J, K, L, M, N constitute the membrane sector of the complex. [4Fe-4S] cluster serves as cofactor.

The protein localises to the cell inner membrane. The enzyme catalyses a quinone + NADH + 5 H(+)(in) = a quinol + NAD(+) + 4 H(+)(out). Its function is as follows. NDH-1 shuttles electrons from NADH, via FMN and iron-sulfur (Fe-S) centers, to quinones in the respiratory chain. The immediate electron acceptor for the enzyme in this species is believed to be ubiquinone. Couples the redox reaction to proton translocation (for every two electrons transferred, four hydrogen ions are translocated across the cytoplasmic membrane), and thus conserves the redox energy in a proton gradient. The chain is NADH-quinone oxidoreductase subunit I from Polaromonas naphthalenivorans (strain CJ2).